The primary structure comprises 454 residues: Epoxide hydrolase 1 (454 aa).

Residues 1-21 traverse the membrane as a helical segment; sequence MWLEILLASVLGFVIYWFVSK. The Cytoplasmic portion of the chain corresponds to 22 to 454; sequence DKEETLLLGD…RKFMGLLEQQ (433 aa). The Nucleophile role is filled by D226. R294 carries the dimethylated arginine modification. Y373 acts as the Proton donor in catalysis. H430 serves as the catalytic Proton acceptor.

This sequence belongs to the peptidase S33 family.

It is found in the microsome membrane. The protein localises to the endoplasmic reticulum membrane. The enzyme catalyses cis-stilbene oxide + H2O = (1R,2R)-hydrobenzoin. It catalyses the reaction 1-(4-methoxyphenyl)-N-methyl-N-[(3-methyloxetan-3-yl)methyl]methanamine + H2O = 2-{[(4-methoxybenzyl)(methyl)amino]methyl}-2-methylpropane-1,3-diol. The catalysed reaction is 8,9-epoxy-(5Z,11Z,14Z)-eicosatrienoate + H2O = 8,9-dihydroxy-(5Z,11Z,14Z)-eicosatrienoate. It carries out the reaction 11,12-epoxy-(5Z,8Z,14Z)-eicosatrienoate + H2O = 11,12-dihydroxy-(5Z,8Z,14Z)-eicosatrienoate. The enzyme catalyses 2-(5Z,8Z,11Z,14Z-eicosatetraenoyl)-glycerol + H2O = glycerol + (5Z,8Z,11Z,14Z)-eicosatetraenoate + H(+). With respect to regulation, inhibited by 10-hydroxystearamide and methoxy-arachidonyl fluorophosphate. Its function is as follows. Biotransformation enzyme that catalyzes the hydrolysis of arene and aliphatic epoxides to less reactive and more water soluble dihydrodiols by the trans addition of water. May play a role in the metabolism of endogenous lipids such as epoxide-containing fatty acids. Metabolizes the abundant endocannabinoid 2-arachidonoylglycerol (2-AG) to free arachidonic acid (AA) and glycerol. Binds 20(S)-hydroxycholesterol (20(S)-OHC). The sequence is that of Epoxide hydrolase 1 (EPHX1) from Sus scrofa (Pig).